A 299-amino-acid polypeptide reads, in one-letter code: Probable lipid kinase YegS (299 aa).

The region spanning 2–133 (AEFPASLLIL…IDMAQVNKQT (132 aa)) is the DAGKc domain. ATP contacts are provided by residues Thr-40, 66-72 (GDGTINE), and Thr-95. Positions 215, 218, and 220 each coordinate Mg(2+). Glu-271 functions as the Proton acceptor in the catalytic mechanism.

The protein belongs to the diacylglycerol/lipid kinase family. YegS lipid kinase subfamily. Requires Mg(2+) as cofactor. Ca(2+) is required as a cofactor.

It localises to the cytoplasm. Functionally, probably phosphorylates lipids; the in vivo substrate is unknown. This Shigella flexneri protein is Probable lipid kinase YegS.